The primary structure comprises 588 residues: Actin-histidine N-methyltransferase (588 aa).

Residues Met-1–Thr-25 are disordered. Positions Gln-10 to Thr-25 are enriched in polar residues. S-adenosyl-L-methionine-binding positions include Arg-75, Glu-104–Phe-106, Arg-254, Asp-275–His-279, and Ser-325–Phe-327. An SET domain is found at Glu-94–Gly-314. The disordered stretch occupies residues Val-546–Glu-588. The span at Gly-548–Glu-566 shows a compositional bias: polar residues. Residues Gly-567 to Ser-579 are compositionally biased toward basic and acidic residues.

Belongs to the class V-like SAM-binding methyltransferase superfamily. SETD3 actin-histidine methyltransferase family. Interacts with MYOD1. Post-translationally, phosphorylated by GSK3B, which is required for recognition by the SCF(FBXW7) complex and subsequent degradation. In terms of processing, ubiquitinated by the SCF(FBXW7) complex following phosphorylation by GSK3B, leading to its degradation by the proteasome.

The protein localises to the cytoplasm. It localises to the nucleus. The enzyme catalyses L-histidyl-[protein] + S-adenosyl-L-methionine = N(tele)-methyl-L-histidyl-[protein] + S-adenosyl-L-homocysteine + H(+). Protein-histidine N-methyltransferase that specifically mediates 3-methylhistidine (tele-methylhistidine) methylation of actin at 'His-73'. Histidine methylation of actin is required for smooth muscle contraction of the laboring uterus during delivery. Does not have protein-lysine N-methyltransferase activity and probably only catalyzes histidine methylation of actin. The sequence is that of Actin-histidine N-methyltransferase from Canis lupus familiaris (Dog).